We begin with the raw amino-acid sequence, 148 residues long: SPbeta prophage-derived disulfide bond formation protein B (148 aa).

A helical transmembrane segment spans residues 7-26 (KSFFLLLFFLSFFGTMASLF). The cysteines at positions 36 and 39 are disulfide-linked. 2 helical membrane passes run 41–60 (YQRIFLYPIPIILLIGLLKK) and 67–84 (YVVFLSSIGLIIAFYHYI). Cysteine 95 and cysteine 102 are disulfide-bonded. Residues 111–135 (GFITLPLMSSVCFALIFGIGLKLII) form a helical membrane-spanning segment.

Belongs to the DsbB family. BdbC subfamily.

It is found in the cell membrane. In terms of biological role, important but not absolutely essential for the production of the lantibiotic sublancin 168, it may also be required for the stability of other secreted proteins. Not required for competence for DNA uptake. The protein is SPbeta prophage-derived disulfide bond formation protein B (bdbB) of Bacillus subtilis (strain 168).